Here is a 537-residue protein sequence, read N- to C-terminus: ESX-2 secretion system protein EccE2 (537 aa).

A helical membrane pass occupies residues 31–51 (ALGGQLGAVMAVVVGVALVFV).

Belongs to the EccE family. Could be part of the ESX-2 / type VII secretion system (T7SS), which is composed of cytosolic and membrane components.

Its subcellular location is the cell membrane. This chain is ESX-2 secretion system protein EccE2 (eccE2), found in Mycobacterium tuberculosis (strain CDC 1551 / Oshkosh).